The sequence spans 191 residues: MADVPRLQKQYQDEVRPSLTDQFGYENPMEVPRLEKICVNRGVGEVSENQKALDQAVEEMRKITGQHPTIRRAKRSIASFDVREGMPVGVKVTLREARMYEFFDRLVTLALPNIRDFRGVPDRSFDGRGNYTLGIDEQIIFPEIDVDNVDRIDGMDITFVTDAETDEESYALLKGLGMPFVRRGDEEPAEA.

It belongs to the universal ribosomal protein uL5 family. Part of the 50S ribosomal subunit; part of the 5S rRNA/L5/L18/L25 subcomplex. Contacts the 5S rRNA and the P site tRNA. Forms a bridge to the 30S subunit in the 70S ribosome.

This is one of the proteins that bind and probably mediate the attachment of the 5S RNA into the large ribosomal subunit, where it forms part of the central protuberance. In the 70S ribosome it contacts protein S13 of the 30S subunit (bridge B1b), connecting the 2 subunits; this bridge is implicated in subunit movement. Contacts the P site tRNA; the 5S rRNA and some of its associated proteins might help stabilize positioning of ribosome-bound tRNAs. The protein is Large ribosomal subunit protein uL5 of Salinibacter ruber (strain DSM 13855 / M31).